The chain runs to 460 residues: Chromosomal replication initiator protein DnaA (460 aa).

A domain I, interacts with DnaA modulators region spans residues 1–84 (MAVSLWQQCI…RFDIGSRPSA (84 aa)). The segment at 84–123 (AKKPEPAPVAAVRVPSPQTKASVGTAFNTTEPVANTNHRS) is domain II. The domain III, AAA+ region stretch occupies residues 124 to 340 (NINPTYQFDN…GALNRVIANA (217 aa)). Positions 168, 170, 171, and 172 each coordinate ATP. Residues 341–460 (NFTGRPITID…YANLIRTLSS (120 aa)) are domain IV, binds dsDNA.

Belongs to the DnaA family. In terms of assembly, oligomerizes as a right-handed, spiral filament on DNA at oriC.

It is found in the cytoplasm. Plays an essential role in the initiation and regulation of chromosomal replication. ATP-DnaA binds to the origin of replication (oriC) to initiate formation of the DNA replication initiation complex once per cell cycle. Binds the DnaA box (a 9 base pair repeat at the origin) and separates the double-stranded (ds)DNA. Forms a right-handed helical filament on oriC DNA; dsDNA binds to the exterior of the filament while single-stranded (ss)DNA is stabiized in the filament's interior. The ATP-DnaA-oriC complex binds and stabilizes one strand of the AT-rich DNA unwinding element (DUE), permitting loading of DNA polymerase. After initiation quickly degrades to an ADP-DnaA complex that is not apt for DNA replication. Binds acidic phospholipids. The chain is Chromosomal replication initiator protein DnaA from Shewanella oneidensis (strain ATCC 700550 / JCM 31522 / CIP 106686 / LMG 19005 / NCIMB 14063 / MR-1).